A 606-amino-acid polypeptide reads, in one-letter code: Putative helicase 172L (606 aa).

One can recognise a Helicase ATP-binding domain in the interval G59–K264. L72–T79 is an ATP binding site. One can recognise a Helicase C-terminal domain in the interval Y437 to I586.

It belongs to the SNF2/RAD54 helicase family.

The chain is Putative helicase 172L from Invertebrate iridescent virus 6 (IIV-6).